Reading from the N-terminus, the 623-residue chain is Glutamine--fructose-6-phosphate aminotransferase [isomerizing] (623 aa).

The active-site Nucleophile; for GATase activity is C2. Positions 2–228 (CGIVGYIGQA…NDQVVTITAD (227 aa)) constitute a Glutamine amidotransferase type-2 domain. 2 SIS domains span residues 295–435 (IDES…LRGN) and 468–613 (LGRS…VDQP). Residue K618 is the For Fru-6P isomerization activity of the active site.

As to quaternary structure, homodimer.

It localises to the cytoplasm. It carries out the reaction D-fructose 6-phosphate + L-glutamine = D-glucosamine 6-phosphate + L-glutamate. Catalyzes the first step in hexosamine metabolism, converting fructose-6P into glucosamine-6P using glutamine as a nitrogen source. The protein is Glutamine--fructose-6-phosphate aminotransferase [isomerizing] of Corynebacterium efficiens (strain DSM 44549 / YS-314 / AJ 12310 / JCM 11189 / NBRC 100395).